A 412-amino-acid polypeptide reads, in one-letter code: Imidazolonepropionase (412 aa).

The Fe(3+) site is built by His76 and His78. Zn(2+) contacts are provided by His76 and His78. Residues Arg85, Tyr148, and His181 each contribute to the 4-imidazolone-5-propanoate site. Tyr148 is a binding site for N-formimidoyl-L-glutamate. Residue His242 participates in Fe(3+) binding. A Zn(2+)-binding site is contributed by His242. Residue Glu245 participates in 4-imidazolone-5-propanoate binding. Asp317 contributes to the Fe(3+) binding site. Residue Asp317 participates in Zn(2+) binding. N-formimidoyl-L-glutamate is bound by residues Asn319 and Gly321. Position 322 (Ser322) interacts with 4-imidazolone-5-propanoate.

Belongs to the metallo-dependent hydrolases superfamily. HutI family. Requires Zn(2+) as cofactor. Fe(3+) is required as a cofactor.

The protein resides in the cytoplasm. The catalysed reaction is 4-imidazolone-5-propanoate + H2O = N-formimidoyl-L-glutamate. Its pathway is amino-acid degradation; L-histidine degradation into L-glutamate; N-formimidoyl-L-glutamate from L-histidine: step 3/3. In terms of biological role, catalyzes the hydrolytic cleavage of the carbon-nitrogen bond in imidazolone-5-propanoate to yield N-formimidoyl-L-glutamate. It is the third step in the universal histidine degradation pathway. The protein is Imidazolonepropionase of Staphylococcus saprophyticus subsp. saprophyticus (strain ATCC 15305 / DSM 20229 / NCIMB 8711 / NCTC 7292 / S-41).